The sequence spans 295 residues: Glutamate 5-kinase (295 aa).

Lys-9 is an ATP binding site. Ser-49, Asp-136, and Asn-148 together coordinate substrate. Residues 168–169 (TD) and 210–216 (TGGMLTK) each bind ATP.

It belongs to the glutamate 5-kinase family.

Its subcellular location is the cytoplasm. The enzyme catalyses L-glutamate + ATP = L-glutamyl 5-phosphate + ADP. The protein operates within amino-acid biosynthesis; L-proline biosynthesis; L-glutamate 5-semialdehyde from L-glutamate: step 1/2. Catalyzes the transfer of a phosphate group to glutamate to form L-glutamate 5-phosphate. The sequence is that of Glutamate 5-kinase from Neisseria gonorrhoeae (strain NCCP11945).